The chain runs to 498 residues: L-amino acid oxidase Cdc18 (498 aa).

Residues 1–2 (SC) form the signal peptide. Residues C12 and C173 are joined by a disulfide bond. Residues 45–46 (MA), 65–66 (EA), R73, and 87–90 (GPMR) contribute to the FAD site. Residues R90 and H223 each coordinate substrate. Position 263 (V263) interacts with FAD. C333 and C414 are disulfide-bonded. A glycan (N-linked (GlcNAc...) asparagine) is linked at N363. Substrate is bound at residue Y374. Residues E459 and 466 to 471 (GWIDST) contribute to the FAD site. 466 to 467 (GW) is a binding site for substrate.

It belongs to the flavin monoamine oxidase family. FIG1 subfamily. Monomer. This is in contrast with most of its orthologs, that are non-covalently linked homodimers. FAD is required as a cofactor. In terms of tissue distribution, expressed by the venom gland.

It localises to the secreted. The enzyme catalyses an L-alpha-amino acid + O2 + H2O = a 2-oxocarboxylate + H2O2 + NH4(+). It carries out the reaction L-leucine + O2 + H2O = 4-methyl-2-oxopentanoate + H2O2 + NH4(+). Functionally, catalyzes an oxidative deamination of predominantly hydrophobic and aromatic L-amino acids, thus producing hydrogen peroxide that may contribute to the diverse toxic effects of this enzyme. Shows activity on L-Leu. Damages cell membranes of the Gram-positive bacteria S.aureus (MIC=8 ug/ml and MBC=16 ug/ml) and the Gram-negative bacteria A.baumannii (MIC=16 ug/ml and MBC=32 ug/ml). This antimicrobial activity is dependent on the production of hydrogen peroxyde, since it is inhibited by catalase, a hydrogen peroxyde scavenger. In Crotalus durissus cumanensis (South American rattlesnake), this protein is L-amino acid oxidase Cdc18.